A 465-amino-acid polypeptide reads, in one-letter code: Glutamate--tRNA ligase (465 aa).

Residues 10 to 20 (PSPTGQLHIGG) carry the 'HIGH' region motif. Residues Cys99, Cys101, Cys126, and Glu128 each coordinate Zn(2+). A 'KMSKS' region motif is present at residues 236–240 (KLSKR). An ATP-binding site is contributed by Lys239.

Belongs to the class-I aminoacyl-tRNA synthetase family. Glutamate--tRNA ligase type 1 subfamily. Monomer. Zn(2+) is required as a cofactor.

It localises to the cytoplasm. The enzyme catalyses tRNA(Glu) + L-glutamate + ATP = L-glutamyl-tRNA(Glu) + AMP + diphosphate. Catalyzes the attachment of glutamate to tRNA(Glu) in a two-step reaction: glutamate is first activated by ATP to form Glu-AMP and then transferred to the acceptor end of tRNA(Glu). In Lawsonia intracellularis (strain PHE/MN1-00), this protein is Glutamate--tRNA ligase.